A 374-amino-acid polypeptide reads, in one-letter code: P2Y purinoceptor 2 (374 aa).

The Extracellular segment spans residues 1 to 32 (MAAGLDSWNSTINGTWEGDELGYKCRFNEDFK). Residues N9 and N13 are each glycosylated (N-linked (GlcNAc...) asparagine). A helical transmembrane segment spans residues 33–59 (YVLLPVSYGVVCVLGLCLNVVALYIFL). Residues 60–70 (CRLKTWNASTT) lie on the Cytoplasmic side of the membrane. Residues 71–93 (YMFHLAVSDSLYAASLPLLVYYY) traverse the membrane as a helical segment. The Extracellular portion of the chain corresponds to 94 to 110 (AQGDHWPFSTVLCKLVR). C106 and C183 are disulfide-bonded. The helical transmembrane segment at 111-129 (FLFYTNLYCSILFLTCISV) threads the bilayer. The Cytoplasmic portion of the chain corresponds to 130 to 152 (HRCLGVLRPLHSLSWGHARYARR). Residues 153–172 (VAAVVWVLVLACQAPVLYFV) form a helical membrane-spanning segment. Over 173-194 (TTSVRGTRITCHDTSARELFSH) the chain is Extracellular. The chain crosses the membrane as a helical span at residues 195-220 (FVAYSSVMLGLLFAVPFSIILVCYVL). The Cytoplasmic segment spans residues 221 to 245 (MARRLLKPAYGTTGLPRAKRKSVRT). The helical transmembrane segment at 246 to 268 (IALVLAVFALCFLPFHVTRTLYY) threads the bilayer. Topologically, residues 269–286 (SFRSLDLSCHTLNAINMA) are extracellular. A helical membrane pass occupies residues 287–308 (YKITRPLASANSCLDPVLYFLA). The Cytoplasmic portion of the chain corresponds to 309–374 (GQRLVRFARD…AGSETKDIRL (66 aa)). The disordered stretch occupies residues 318–374 (DAKPATEPTPSPQARRKLGLHRPNRTDTVRKDLSISSDDSRRTESTPAGSETKDIRL). Residues 331–340 (ARRKLGLHRP) are compositionally biased toward basic residues. Over residues 341–361 (NRTDTVRKDLSISSDDSRRTE) the composition is skewed to basic and acidic residues.

The protein belongs to the G-protein coupled receptor 1 family.

Its subcellular location is the cell membrane. Receptor for ATP and UTP coupled to G-proteins that activate a phosphatidylinositol-calcium second messenger system. The affinity range is UTP = ATP &gt; ATP-gamma-S &gt;&gt; 2-methylthio-ATP = ADP. The chain is P2Y purinoceptor 2 (P2ry2) from Rattus norvegicus (Rat).